The following is a 271-amino-acid chain: S-adenosylmethionine decarboxylase proenzyme (271 aa).

Catalysis depends on Ser-121, which acts as the Schiff-base intermediate with substrate; via pyruvic acid. Ser-121 carries the post-translational modification Pyruvic acid (Ser); by autocatalysis. The active-site Proton acceptor; for processing activity is the His-126. Cys-149 acts as the Proton donor; for catalytic activity in catalysis.

The protein belongs to the prokaryotic AdoMetDC family. Type 2 subfamily. As to quaternary structure, heterooctamer of four alpha and four beta chains arranged as a tetramer of alpha/beta heterodimers. Pyruvate serves as cofactor. Is synthesized initially as an inactive proenzyme. Formation of the active enzyme involves a self-maturation process in which the active site pyruvoyl group is generated from an internal serine residue via an autocatalytic post-translational modification. Two non-identical subunits are generated from the proenzyme in this reaction, and the pyruvate is formed at the N-terminus of the alpha chain, which is derived from the carboxyl end of the proenzyme. The post-translation cleavage follows an unusual pathway, termed non-hydrolytic serinolysis, in which the side chain hydroxyl group of the serine supplies its oxygen atom to form the C-terminus of the beta chain, while the remainder of the serine residue undergoes an oxidative deamination to produce ammonia and the pyruvoyl group blocking the N-terminus of the alpha chain.

It catalyses the reaction S-adenosyl-L-methionine + H(+) = S-adenosyl 3-(methylsulfanyl)propylamine + CO2. The protein operates within amine and polyamine biosynthesis; S-adenosylmethioninamine biosynthesis; S-adenosylmethioninamine from S-adenosyl-L-methionine: step 1/1. In terms of biological role, catalyzes the decarboxylation of S-adenosylmethionine to S-adenosylmethioninamine (dcAdoMet), the propylamine donor required for the synthesis of the polyamines spermine and spermidine from the diamine putrescine. This chain is S-adenosylmethionine decarboxylase proenzyme, found in Clostridium beijerinckii (strain ATCC 51743 / NCIMB 8052) (Clostridium acetobutylicum).